The following is a 1403-amino-acid chain: Centrosomal protein of 162 kDa (1403 aa).

The segment at 19-44 (ELSDDSFENSNETPSQPNKDRKKKDT) is disordered. Residues 26–35 (ENSNETPSQP) show a composition bias toward polar residues. 2 positions are modified to phosphoserine: Ser156 and Ser159. 3 disordered regions span residues 171–235 (NVEP…EKTG), 305–342 (DTGEPRIEASPGHSVRSSAKDGLQENEESSKNISTTES), and 449–586 (NPSL…SDDS). Basic and acidic residues predominate over residues 176–189 (EGGRENESEHKELP). Acidic residues predominate over residues 192–204 (YSDDFEDAEDTDE). Positions 206–220 (LITKDEETRPKENPE) are enriched in basic and acidic residues. A compositionally biased stretch (polar residues) spans 449–466 (NPSLLPQDNKANQTSRSR). Position 468 is a phosphoserine (Ser468). Residues 481–496 (PCKKARSAPPLPRRKP) are compositionally biased toward basic residues. Positions 504–517 (ARSSGYSKPSSPLQ) are enriched in polar residues. Composition is skewed to basic and acidic residues over residues 522–532 (LEKKTSKDNTK) and 567–581 (PHREGSPATPKRPED). 3 coiled-coil regions span residues 610–1120 (KRAQ…MLSR), 1170–1205 (EVLEENYRLRSELEGLTLEREKLKMESEAAVCQLES), and 1234–1385 (CQNA…LHRQ).

The protein belongs to the CEP162 family. Interacts with alpha-tubulin. Interacts with CPNE4. Interacts with CEP290.

It localises to the cytoplasm. It is found in the cytoskeleton. The protein localises to the microtubule organizing center. The protein resides in the centrosome. Its subcellular location is the centriole. It localises to the spindle. It is found in the nucleus. Required to promote assembly of the transition zone in primary cilia. Acts by specifically recognizing and binding the axonemal microtubule. Localizes to the distal ends of centrioles before ciliogenesis and directly binds to axonemal microtubule, thereby promoting and restricting transition zone formation specifically at the cilia base. Required to mediate CEP290 association with microtubules. This chain is Centrosomal protein of 162 kDa (Cep162), found in Rattus norvegicus (Rat).